An 855-amino-acid polypeptide reads, in one-letter code: Suppressor of tumorigenicity 14 protein homolog (855 aa).

The disordered stretch occupies residues M1–K21. At M1 to W55 the chain is on the cytoplasmic side. Position 13 is a phosphoserine (S13). The chain crosses the membrane as a helical; Signal-anchor for type II membrane protein span at residues V56–A76. Over W77–V855 the chain is Extracellular. One can recognise an SEA domain in the interval V86–P203. The N-linked (GlcNAc...) asparagine glycan is linked to N109. Cysteines 214 and 244 form a disulfide. CUB domains follow at residues C214–L334 and C340–F447. 2 N-linked (GlcNAc...) asparagine glycosylation sites follow: N302 and N365. 15 disulfides stabilise this stretch: C340-C366, C397-C410, C453-C464, C459-C477, C471-C486, C488-C501, C496-C514, C508-C523, C525-C537, C532-C550, C544-C559, C567-C579, C574-C593, C587-C602, and C641-C657. 4 consecutive LDL-receptor class A domains span residues P452–K487, K487–S524, S524–Q560, and P566–D603. N489 carries N-linked (GlcNAc...) asparagine glycosylation. The Peptidase S1 domain maps to V615–G854. Catalysis depends on charge relay system residues H656 and D711. The N-linked (GlcNAc...) asparagine glycan is linked to N772. Cystine bridges form between C776–C790 and C801–C830. S805 functions as the Charge relay system in the catalytic mechanism.

The protein belongs to the peptidase S1 family. Interacts with CDCP1. May interact with TMEFF1.

It is found in the membrane. The enzyme catalyses Cleaves various synthetic substrates with Arg or Lys at the P1 position and prefers small side-chain amino acids, such as Ala and Gly, at the P2 position.. Exhibits trypsin-like activity as defined by cleavage of synthetic substrates with Arg or Lys as the P1 site. Involved in the terminal differentiation of keratinocytes through prostasin (PRSS8) activation and filaggrin (FLG) processing. Proteolytically cleaves and therefore activates TMPRSS13. This chain is Suppressor of tumorigenicity 14 protein homolog (ST14), found in Bos taurus (Bovine).